The chain runs to 171 residues: 2-vinyl bacteriochlorophyllide hydratase (171 aa).

It functions in the pathway porphyrin-containing compound metabolism; bacteriochlorophyll biosynthesis (light-independent). The chain is 2-vinyl bacteriochlorophyllide hydratase (bchF) from Rhodobacter capsulatus (strain ATCC BAA-309 / NBRC 16581 / SB1003).